The following is a 357-amino-acid chain: Mitochondrial carrier protein LEU5 (357 aa).

6 consecutive transmembrane segments (helical) span residues 31 to 47, 103 to 119, 136 to 153, 208 to 228, 269 to 285, and 325 to 347; these read DYIVRSGLAGGISGSCA, LRIFPYAAVKFVAYEQI, LVSGSLAGLCSVFITYPL, VPTVLGMIPYAGVSFFAHDLL, ISGGLAGMASQTAAYPF, and GFFVGLSIGYIKVTPMVACSFFV. 3 Solcar repeats span residues 31–122, 130–231, and 262–354; these read DYIV…IRNT, ESHW…LHDV, and LRTW…MKWN.

It belongs to the mitochondrial carrier (TC 2.A.29) family.

The protein resides in the mitochondrion inner membrane. Required for the accumulation of coenzyme A in the mitochondrial matrix. The chain is Mitochondrial carrier protein LEU5 (LEU5) from Saccharomyces cerevisiae (strain ATCC 204508 / S288c) (Baker's yeast).